The following is a 488-amino-acid chain: Multidrug resistance outer membrane protein MdtP (488 aa).

Residues 1 to 23 (MINRQLSRLLLCSILGSTTLISG) form the signal peptide. C24 is lipidated: N-palmitoyl cysteine. The S-diacylglycerol cysteine moiety is linked to residue C24.

Belongs to the outer membrane factor (OMF) (TC 1.B.17) family. As to quaternary structure, could be part of a tripartite efflux system composed of MdtN, MdtO and MdtP.

Its subcellular location is the cell outer membrane. Functionally, could be involved in resistance to puromycin, acriflavine and tetraphenylarsonium chloride. The chain is Multidrug resistance outer membrane protein MdtP (mdtP) from Escherichia coli (strain K12).